We begin with the raw amino-acid sequence, 423 residues long: MDEVSPAVAVPFRPFTDPHAGLRGYCNGESRVTLPESSCSGDGAMKDSSFEINTRQDSLTSSSSAMAGVDISAGDEINGSDEFDPRSMNQSEKKVLSRTESRSLFEFKCVPLYGVTSICGRRPEMEDSVSTIPRFLQVSSSSLLDGRVTNGFNPHLSAHFFGVYDGHGGSQVANYCRERMHLALTEEIVKEKPEFCDGDTWQEKWKKALFNSFMRVDSEIETVAHAPETVGSTSVVAVVFPTHIFVANCGDSRAVLCRGKTPLALSVDHKPDRDDEAARIEAAGGKVIRWNGARVFGVLAMSRSIGDRYLKPSVIPDPEVTSVRRVKEDDCLILASDGLWDVMTNEEVCDLARKRILLWHKKNAMAGEALLPAEKRGEGKDPAAMSAAEYLSKMALQKGSKDNISVVVVDLKGIRKFKSKSLN.

The segment at Gly74–Val95 is disordered. The PPM-type phosphatase domain maps to Leu112–Leu411. Residues Asp165, Asp251, and Ser252 each coordinate Mg(2+). An intrachain disulfide couples Cys257 to Cys331. Asp337 and Asp402 together coordinate Mg(2+).

The protein belongs to the PP2C family. Interacts with SPK1, CIPK15/PKS3, GPX3, SCAR1, SCAR2, SCAR3 and SCARL. Also interacts with CIPK24/SOS2. Binds to the fibrillin precursor protein. Interacts with ABA-bounded PYR1, PYL1, PYL2, PYL3, PYL4, PYL5, PYL6, PYL8 and PYL9, and with free PYL2, PYL3 and PYL4. Interacts with and represses GHR1, and, to a lesser extent, SRK2E/OST1. Mg(2+) is required as a cofactor. It depends on Mn(2+) as a cofactor.

The catalysed reaction is O-phospho-L-seryl-[protein] + H2O = L-seryl-[protein] + phosphate. It carries out the reaction O-phospho-L-threonyl-[protein] + H2O = L-threonyl-[protein] + phosphate. With respect to regulation, phosphatase activity repressed by oxidized ATGPX3, free fatty acids (e.g. arachidonic acid (20:4) and Linolenic acid (18:3)) and by H(2)O(2). Repressed by PYR/PYL/RCAR ABA receptors in an ABA-dependent manner. In terms of biological role, repressor of the abscisic acid (ABA) signaling pathway that regulates numerous ABA responses, such as stomatal closure, osmotic water permeability of the plasma membrane (Pos), high light stress, response to glucose, seed germination and inhibition of vegetative growth. During the stomatal closure regulation, modulates the inward calcium-channel permeability as well as H(2)O(2) and oxidative burst in response to ABA and dehydration. Represses GHR1 and, to some extent, SRK2E/OST1, kinases involved in the regulation of SLAC1-dependent stomatal closure. Controls negatively fibrillin that is involved in mediating ABA-induced photoprotection. May be implicated in ABA content regulation. Involved in acquired thermotolerance of root growth and seedling survival. Required for the Erwinia amylovora harpin-induced (HrpN) drought tolerance. Involved in the hydrotropic response. In Arabidopsis thaliana (Mouse-ear cress), this protein is Protein phosphatase 2C 77.